A 598-amino-acid polypeptide reads, in one-letter code: UvrABC system protein C (598 aa).

Positions 14–91 constitute a GIY-YIG domain; that stretch reads DSPGCYLHKD…IQKNMPKYNI (78 aa). A UVR domain is found at 196–231; it reads DKIIEDLRSKMLAASEEMAFERAAEYRDLISGIATM.

Belongs to the UvrC family. Interacts with UvrB in an incision complex.

The protein localises to the cytoplasm. The UvrABC repair system catalyzes the recognition and processing of DNA lesions. UvrC both incises the 5' and 3' sides of the lesion. The N-terminal half is responsible for the 3' incision and the C-terminal half is responsible for the 5' incision. This Streptococcus pyogenes serotype M28 (strain MGAS6180) protein is UvrABC system protein C.